Reading from the N-terminus, the 484-residue chain is Regulatory protein ViaA (484 aa).

Belongs to the ViaA family. Homodimer. Interacts with RavA.

The protein localises to the cytoplasm. In terms of biological role, component of the RavA-ViaA chaperone complex, which may act on the membrane to optimize the function of some of the respiratory chains. ViaA stimulates the ATPase activity of RavA. The sequence is that of Regulatory protein ViaA from Edwardsiella ictaluri (strain 93-146).